We begin with the raw amino-acid sequence, 150 residues long: MQVILLETIKNLGDLGAVVDVRSGYGRNFLIPQGKALPATKANLAEVEQRRAELEKHAAQQLGAAQERAEKLNETTVSIAAKAGDEGKLFGSVGTRDIAEAISSSTGVDVEKAEVKLPHGALRTTGEFEIDLALHAEVTVAIKLAVVPAE.

This sequence belongs to the bacterial ribosomal protein bL9 family.

Functionally, binds to the 23S rRNA. This is Large ribosomal subunit protein bL9 from Alcanivorax borkumensis (strain ATCC 700651 / DSM 11573 / NCIMB 13689 / SK2).